Reading from the N-terminus, the 621-residue chain is 1-deoxy-D-xylulose-5-phosphate synthase (621 aa).

Residues H80 and 121-123 each bind thiamine diphosphate; that span reads GHS. D152 is a Mg(2+) binding site. Thiamine diphosphate contacts are provided by residues 153–154, N181, Y288, and E370; that span reads GA. Residue N181 participates in Mg(2+) binding.

The protein belongs to the transketolase family. DXPS subfamily. As to quaternary structure, homodimer. It depends on Mg(2+) as a cofactor. The cofactor is thiamine diphosphate.

It carries out the reaction D-glyceraldehyde 3-phosphate + pyruvate + H(+) = 1-deoxy-D-xylulose 5-phosphate + CO2. It functions in the pathway metabolic intermediate biosynthesis; 1-deoxy-D-xylulose 5-phosphate biosynthesis; 1-deoxy-D-xylulose 5-phosphate from D-glyceraldehyde 3-phosphate and pyruvate: step 1/1. Catalyzes the acyloin condensation reaction between C atoms 2 and 3 of pyruvate and glyceraldehyde 3-phosphate to yield 1-deoxy-D-xylulose-5-phosphate (DXP). The sequence is that of 1-deoxy-D-xylulose-5-phosphate synthase from Aeromonas hydrophila subsp. hydrophila (strain ATCC 7966 / DSM 30187 / BCRC 13018 / CCUG 14551 / JCM 1027 / KCTC 2358 / NCIMB 9240 / NCTC 8049).